Consider the following 274-residue polypeptide: MKKKLKLTSLLGLSLLIMTACATNGVTSDITAESADFWSKLVYFFAEIIRFLSFDISIGVGIILFTVLIRTVLLPVFQVQMVASRKMQEAQPRIKALREQYPGRDMESRTKLEQEMRKVFKEMGVRQSDSLWPILIQMPVILALFQALSRVDFLKTGHFLWINLGSVDTTLVLPILAAVFTFLSTWLSNKALSERNGATTAMMYGIPVLIFIFAVYAPGGVALYWTVSNAYQVLQTYFLNNPFKIIAEREAVVQAQKDLENRKRKAKKKAQKTK.

The N-terminal stretch at 1–20 (MKKKLKLTSLLGLSLLIMTA) is a signal peptide. Cys21 carries the N-palmitoyl cysteine lipid modification. Cys21 carries S-diacylglycerol cysteine lipidation. 4 helical membrane passes run 56 to 76 (ISIG…LLPV), 128 to 148 (SDSL…FQAL), 167 to 187 (VDTT…STWL), and 205 to 225 (GIPV…ALYW).

This sequence belongs to the OXA1/ALB3/YidC family. Type 2 subfamily.

The protein resides in the cell membrane. In terms of biological role, required for the insertion and/or proper folding and/or complex formation of integral membrane proteins into the membrane. Involved in integration of membrane proteins that insert both dependently and independently of the Sec translocase complex, as well as at least some lipoproteins. In Streptococcus pneumoniae serotype 4 (strain ATCC BAA-334 / TIGR4), this protein is Membrane protein insertase YidC 2.